Reading from the N-terminus, the 192-residue chain is Cell division protein SepF (192 aa).

The tract at residues 15 to 70 (GDPLEYEEDGEEYEQVYREENKREEARRATAGTAAAATPTAAAQASDAAPMGSGPA) is disordered. The segment covering 18-28 (LEYEEDGEEYE) has biased composition (acidic residues). Basic and acidic residues predominate over residues 29–42 (QVYREENKREEARR). Residues 43–63 (ATAGTAAAATPTAAAQASDAA) are compositionally biased toward low complexity.

The protein belongs to the SepF family. In terms of assembly, homodimer. Interacts with FtsZ.

It localises to the cytoplasm. Its function is as follows. Cell division protein that is part of the divisome complex and is recruited early to the Z-ring. Probably stimulates Z-ring formation, perhaps through the cross-linking of FtsZ protofilaments. Its function overlaps with FtsA. In Gloeobacter violaceus (strain ATCC 29082 / PCC 7421), this protein is Cell division protein SepF.